The sequence spans 907 residues: Alanine--tRNA ligase (907 aa).

Zn(2+) is bound by residues H602, H606, C706, and H710.

It belongs to the class-II aminoacyl-tRNA synthetase family. Zn(2+) serves as cofactor.

The protein localises to the cytoplasm. It catalyses the reaction tRNA(Ala) + L-alanine + ATP = L-alanyl-tRNA(Ala) + AMP + diphosphate. In terms of biological role, catalyzes the attachment of alanine to tRNA(Ala) in a two-step reaction: alanine is first activated by ATP to form Ala-AMP and then transferred to the acceptor end of tRNA(Ala). Also edits incorrectly charged Ser-tRNA(Ala) and Gly-tRNA(Ala) via its editing domain. The protein is Alanine--tRNA ligase of Thermofilum pendens (strain DSM 2475 / Hrk 5).